The chain runs to 493 residues: Voltage-gated potassium channel regulatory subunit KCNF1 (493 aa).

The Cytoplasmic portion of the chain corresponds to 1-183 (MDASAEQSLP…KPESSCPARV (183 aa)). Residues 184-204 (VAVLSFLLILVSSVVMCMGTI) traverse the membrane as a helical segment. Residues 205 to 223 (PELQVVDSEGNRVEHPTLE) lie on the Extracellular side of the membrane. A helical transmembrane segment spans residues 224–244 (NVETACIGWFTLEYLLRLFSS). The Cytoplasmic portion of the chain corresponds to 245 to 249 (PNKLH). The helical transmembrane segment at 250-270 (FALSFMNIVDVLAILPFYVSL) threads the bilayer. The Extracellular portion of the chain corresponds to 271–289 (TLTHLGARMMELTNVQQAV). A helical; Voltage-sensor membrane pass occupies residues 290 to 310 (QALRIMRIARIFKLARHSSGL). The Cytoplasmic segment spans residues 311 to 324 (QTLTYALKRSFKEL). A helical membrane pass occupies residues 325-345 (GLLLMYLAVGIFVFSALGYTM). At 346–357 (EQSHPETLFKSI) the chain is on the extracellular side. The segment at residues 358 to 378 (PQSFWWAIITMTTVGYGDIYP) is an intramembrane region (pore-forming). The short motif at 370–375 (TVGYGD) is the Selectivity filter element. At 379–385 (KTTLGKL) the chain is on the extracellular side. Residues 386–406 (NAAISFLCGVIAIALPIHPII) traverse the membrane as a helical segment. The Cytoplasmic segment spans residues 407-493 (NNFVRYYNKQ…HHRTRLQSCK (87 aa)). Residues 433 to 468 (NSSSAESKPGGSRSDLDTLPPEPAAREGPSWGSRLK) form a disordered region.

The protein belongs to the potassium channel family. F (TC 1.A.1.2) subfamily. Kv5.1/KCNF1 sub-subfamily. In terms of assembly, heterotetramer with KCNB1 or KCNB2. Expressed in brain namely in the piriform cortex, olfactory tubercle, and medial habenular nucleus. Also expressed in the medial amygdaloid nuclei and the lateral amygdaloid area.

The protein resides in the cell membrane. Functionally, regulatory alpha-subunit of the voltage-gated potassium (Kv) channel which, when coassembled with KCNB1 or KCNB2, can modulate their expression and their gating kinetics by acting on deactivation upon repolarization and inactivation during maintained depolarization. Accelerates inactivation but has relatively little effect on deactivation. Coexpression with KCNB1 or KCNB2 markedly slows inactivation. Each modulatory subunit has its own specific properties of regulation, and can lead to extensive inhibitions, to large changes in kinetics, and/or to large shifts in the voltage dependencies of the inactivation process. The gating kinetics depends on the nature and stoichiometry of the associated regulatory sunbunit. Fails to produce a potassium current when expressed alone. The sequence is that of Voltage-gated potassium channel regulatory subunit KCNF1 from Rattus norvegicus (Rat).